The sequence spans 349 residues: MEDPQSKEPAGEAVALALLESPRPEGGEEPPRPSPEETQQCKFDGQETKGSKFITSSASDFSDPVYKEIAITNGCINRMSKEELRAKLSEFKLETRGVKDVLKKRLKNYYKKQKLMLKESNFADSYYDYICIIDFEATCEEGNPPEFVHEIIEFPVVLLNTHTLEIEDTFQQYVRPEINTQLSDFCISLTGITQDQVDRADTFPQVLKKVIDWMKLKELGTKYKYSLLTDGSWDMSKFLNIQCQLSRLKYPPFAKKWINIRKSYGNFYKVPRSQTKLTIMLEKLGMDYDGRPHCGLDDSKNIARIAVRMLQDGCELRINEKMHAGQLMSVSSSLPIEGTPPPQMPHFRK.

Composition is skewed to basic and acidic residues over residues 1-10 (MEDPQSKEPA) and 22-35 (PRPEGGEEPPRPSP). The disordered stretch occupies residues 1-48 (MEDPQSKEPAGEAVALALLESPRPEGGEEPPRPSPEETQQCKFDGQET). Ser-59 and Ser-62 each carry phosphoserine. In terms of domain architecture, SAP spans 76-110 (INRMSKEELRAKLSEFKLETRGVKDVLKKRLKNYY). Residues 130 to 306 (ICIIDFEATC…DDSKNIARIA (177 aa)) enclose the Exonuclease domain. Asp-134 and Glu-136 together coordinate Mg(2+). Glu-136 acts as the Proton acceptor in catalysis. AMP is bound by residues Glu-136 and Ala-137. Asp-234 contacts Mg(2+). Residue His-293 is the Proton acceptor of the active site. His-293 contributes to the AMP binding site. Asp-298 serves as a coordination point for Mg(2+).

In terms of assembly, identified in a histone pre-mRNA complex, at least composed of ERI1, LSM11, SLBP, SNRPB, SYNCRIP and YBX1. Interacts in a cooperative manner with SLBP to the mature 3'-end of histone mRNAs. Binds to 40S and 60S ribosomal subunits and to 80S assembled ribosomes. Found in a ternary complex with SLBP and the stem-loop structure of the 3'-end of histone mRNAs. It depends on Mg(2+) as a cofactor.

It is found in the cytoplasm. Its subcellular location is the nucleus. The protein resides in the nucleolus. The catalysed reaction is Exonucleolytic cleavage in the 3'- to 5'-direction to yield nucleoside 5'-phosphates.. Although it can bind simultaneously with SLBP to the 3'-end of histone mRNA, the presence of SLBP prevents the exonuclease activity. RNA exonuclease that binds to the 3'-end of histone mRNAs and degrades them, suggesting that it plays an essential role in histone mRNA decay after replication. A 2' and 3'-hydroxyl groups at the last nucleotide of the histone 3'-end is required for efficient 3'-end histone mRNA exonuclease activity and degradation of RNA substrates. Also able to degrade the 3'-overhangs of short interfering RNAs (siRNAs) in vitro, suggesting a possible role as regulator of RNA interference (RNAi). Required for binding the 5'-ACCCA-3' sequence present in stem-loop structure. Able to bind other mRNAs. Required for 5.8S rRNA 3'-end processing. Also binds to 5.8s ribosomal RNA. Binds with high affinity to the stem-loop structure of replication-dependent histone pre-mRNAs. In vitro, does not have sequence specificity. In vitro, has weak DNA exonuclease activity. In vitro, shows biphasic kinetics such that there is rapid hydrolysis of the last three unpaired RNA nucleotides in the 39 flanking sequence followed by a much slower cleavage through the stem that occurs over a longer incubation period in the order of hours. ERI1-mediated RNA metabolism plays a key role in chondrogenesis. The chain is 3'-5' exoribonuclease 1 from Homo sapiens (Human).